Consider the following 347-residue polypeptide: Probable arabinogalactan endo-beta-1,4-galactanase A (347 aa).

An N-terminal signal peptide occupies residues 1-16; that stretch reads MLFSYLLATLPLLANA. Residue Glu150 is the Proton donor of the active site. The active-site Nucleophile is Glu260.

This sequence belongs to the glycosyl hydrolase 53 family.

Its subcellular location is the secreted. The catalysed reaction is The enzyme specifically hydrolyzes (1-&gt;4)-beta-D-galactosidic linkages in type I arabinogalactans.. Its function is as follows. Endogalactanase involved in the degradation of plant cell wall polysaccharides, and more particularly of hairy regions of pectin. The sequence is that of Probable arabinogalactan endo-beta-1,4-galactanase A (galA) from Aspergillus flavus (strain ATCC 200026 / FGSC A1120 / IAM 13836 / NRRL 3357 / JCM 12722 / SRRC 167).